The primary structure comprises 111 residues: Ribosome-binding factor A (111 aa).

The protein belongs to the RbfA family. As to quaternary structure, monomer. Binds 30S ribosomal subunits, but not 50S ribosomal subunits or 70S ribosomes.

The protein localises to the cytoplasm. Its function is as follows. One of several proteins that assist in the late maturation steps of the functional core of the 30S ribosomal subunit. Associates with free 30S ribosomal subunits (but not with 30S subunits that are part of 70S ribosomes or polysomes). Required for efficient processing of 16S rRNA. May interact with the 5'-terminal helix region of 16S rRNA. In Helicobacter pylori (strain G27), this protein is Ribosome-binding factor A.